The chain runs to 698 residues: Polyribonucleotide nucleotidyltransferase (698 aa).

Asp485 and Asp491 together coordinate Mg(2+). Positions 552-611 (PRIHTIKINTDKIRDVIGKGGAVIRSLCEETGTTIEIEDDGTVKIAATSGEQADDAINRI) constitute a KH domain. An S1 motif domain is found at 621 to 689 (GTIYTGKVVR…RQGRVRLSIK (69 aa)).

Belongs to the polyribonucleotide nucleotidyltransferase family. Component of the RNA degradosome, which is a multiprotein complex involved in RNA processing and mRNA degradation. Requires Mg(2+) as cofactor.

Its subcellular location is the cytoplasm. The enzyme catalyses RNA(n+1) + phosphate = RNA(n) + a ribonucleoside 5'-diphosphate. Functionally, involved in mRNA degradation. Catalyzes the phosphorolysis of single-stranded polyribonucleotides processively in the 3'- to 5'-direction. The polypeptide is Polyribonucleotide nucleotidyltransferase (Psychromonas ingrahamii (strain DSM 17664 / CCUG 51855 / 37)).